A 196-amino-acid polypeptide reads, in one-letter code: ATP-dependent Clp protease proteolytic subunit 1 (196 aa).

The active-site Nucleophile is Ser-96. His-121 is a catalytic residue.

Belongs to the peptidase S14 family. In terms of assembly, fourteen ClpP subunits assemble into 2 heptameric rings which stack back to back to give a disk-like structure with a central cavity, resembling the structure of eukaryotic proteasomes.

It is found in the cytoplasm. It catalyses the reaction Hydrolysis of proteins to small peptides in the presence of ATP and magnesium. alpha-casein is the usual test substrate. In the absence of ATP, only oligopeptides shorter than five residues are hydrolyzed (such as succinyl-Leu-Tyr-|-NHMec, and Leu-Tyr-Leu-|-Tyr-Trp, in which cleavage of the -Tyr-|-Leu- and -Tyr-|-Trp bonds also occurs).. In terms of biological role, cleaves peptides in various proteins in a process that requires ATP hydrolysis. Has a chymotrypsin-like activity. Plays a major role in the degradation of misfolded proteins. The chain is ATP-dependent Clp protease proteolytic subunit 1 from Prochlorococcus marinus subsp. pastoris (strain CCMP1986 / NIES-2087 / MED4).